We begin with the raw amino-acid sequence, 951 residues long: Zinc fingers and homeoboxes protein 3 (951 aa).

A disordered region spans residues methionine 1–asparagine 66. Over residues proline 42–serine 58 the composition is skewed to low complexity. 2 C2H2-type zinc fingers span residues tyrosine 77–histidine 100 and phenylalanine 109–histidine 132. The tract at residues lysine 198–asparagine 249 is disordered. Polar residues predominate over residues threonine 232–proline 244. Residues alanine 237–serine 481 form a required for homodimerization and interaction with NFYA region. Positions leucine 297 to serine 495 are required for repressor activity. 2 DNA-binding regions (homeobox) span residues serine 298–tryptophan 357 and alanine 487–lysine 546. Positions tyrosine 490 to threonine 548 are required for nuclear localization. Serine 597 is modified (phosphoserine). A DNA-binding region (homeobox 3) is located at residues threonine 605–glutamate 664. 2 disordered regions span residues glutamate 621–threonine 642 and asparagine 661–serine 702. Residues asparagine 661–glutamine 674 are compositionally biased toward basic and acidic residues. A compositionally biased stretch (acidic residues) spans glutamate 675–alanine 690. A phosphoserine mark is found at serine 701 and serine 716. 2 DNA-binding regions (homeobox) span residues proline 759–glutamine 818 and phenylalanine 830–valine 889. A disordered region spans residues glutamate 885–aspartate 951. A phosphoserine mark is found at serine 922 and serine 941. Positions phenylalanine 937–aspartate 951 are enriched in polar residues.

The protein belongs to the ZHX family. Homodimer (via homeobox domain 1). Heterodimer with ZHX1 (via homeobox domain 1). Heterodimer with ZHX2 (via homeobox domain 1). Heterodimerization with ZHX1 is a prerequisite for repressor activity. Interacts with NFYA. Widely expressed.

Its subcellular location is the cytoplasm. The protein localises to the nucleus. Acts as a transcriptional repressor. Involved in the early stages of mesenchymal stem cell (MSC) osteogenic differentiation. Is a regulator of podocyte gene expression during primary glomerula disease. Binds to promoter DNA. In Rattus norvegicus (Rat), this protein is Zinc fingers and homeoboxes protein 3 (Zhx3).